Reading from the N-terminus, the 361-residue chain is Cell cycle control protein 50A (361 aa).

Residues 1–28 (MAMNYNAKDEVDGGPPCPPGGTAKTRRP) are disordered. An N-acetylalanine modification is found at Ala-2. A required for ATPase and aminophospholipid flippase activity region spans residues 2 to 48 (AMNYNAKDEVDGGPPCPPGGTAKTRRPDNTAFKQQRLPAWQPILTAG). Residues 2–49 (AMNYNAKDEVDGGPPCPPGGTAKTRRPDNTAFKQQRLPAWQPILTAGT) lie on the Cytoplasmic side of the membrane. The interval 49–348 (TVLPTFFIIG…LGVVLLVINH (300 aa)) is interaction with ATP8A2. Residues 50–70 (VLPTFFIIGLIFIPIGIGIFV) form a helical membrane-spanning segment. Over 71 to 325 (TSNNIREIEI…SWMGGKNPFL (255 aa)) the chain is Exoplasmic loop. Intrachain disulfides connect Cys-91-Cys-104, Cys-94-Cys-102, and Cys-157-Cys-171. N-linked (GlcNAc...) asparagine glycans are attached at residues Asn-180, Asn-190, and Asn-294. Residues 326 to 346 (GIAYITIGSISFLLGVVLLVI) form a helical membrane-spanning segment. The Cytoplasmic portion of the chain corresponds to 347–361 (NHKYRNSSNTADITI).

The protein belongs to the CDC50/LEM3 family. Component of various P4-ATPase flippase complexes which consists of a catalytic alpha subunit and an accessory beta subunit. Interacts with ATP8A1 to form a flippase complex; this complex forms an intermediate phosphoenzyme. Interacts with ATP8A2 to form a flippase complex. ATP8B1:TMEM30A and ATP8B2:TMEM30A flippase complexes have been shown to form intermediate phosphoenzymes in vitro. Interacts with alpha subunits ATP8A1, ATP8B1, ATP8B2, ATP8B4, ATP10A, ATP10B, ATP10D, ATP11A, ATP11B and ATP11C. Post-translationally, N-glycosylated; contributes to ATP8A2:TMEM30A flippase complex assembly but not to functional activity. Expressed in photoreceptor cells; detected in retina outer segment and other retinal layers (at protein level).

It localises to the membrane. The protein localises to the golgi apparatus. Its subcellular location is the cytoplasmic vesicle. The protein resides in the secretory vesicle membrane. It is found in the apical cell membrane. It localises to the photoreceptor inner segment. The protein localises to the cell projection. Its subcellular location is the cilium. The protein resides in the photoreceptor outer segment. Accessory component of a P4-ATPase flippase complex which catalyzes the hydrolysis of ATP coupled to the transport of aminophospholipids from the outer to the inner leaflet of various membranes and ensures the maintenance of asymmetric distribution of phospholipids. Phospholipid translocation also seems to be implicated in vesicle formation and in uptake of lipid signaling molecules. The beta subunit may assist in binding of the phospholipid substrate. Required for the proper folding, assembly and ER to Golgi exit of the ATP8A2:TMEM30A flippase complex. ATP8A2:TMEM30A may be involved in regulation of neurite outgrowth, and, reconstituted to liposomes, predomiminantly transports phosphatidylserine (PS) and to a lesser extent phosphatidylethanolamine (PE). The ATP8A1:TMEM30A flippase complex seems to play a role in regulation of cell migration probably involving flippase-mediated translocation of phosphatidylethanolamine (PE) at the plasma membrane. Required for the formation of the ATP8A2, ATP8B1 and ATP8B2 P-type ATPAse intermediate phosphoenzymes. Involved in uptake of platelet-activating factor (PAF). Can also mediate the export of alpha subunits ATP8A1, ATP8B1, ATP8B2, ATP8B4, ATP10A, ATP10B, ATP10D, ATP11A, ATP11B and ATP11C from the ER to other membrane localizations. The chain is Cell cycle control protein 50A from Bos taurus (Bovine).